Reading from the N-terminus, the 252-residue chain is Deoxyuridine 5'-triphosphate nucleotidohydrolase, mitochondrial (252 aa).

A mitochondrion-targeting transit peptide spans 1–69 (MTPLCPRPAL…AGRLSQGCRG (69 aa)). C11, S88, and S99 each carry phosphoserine. Residues 78-104 (WKGELPKAGGSPAPGPETPAISPSKRA) form a disordered region. Residues 173-175 (RSG), 187-193 (GVIDEDY), G198, R241, and 246-247 (FG) each bind dUTP.

It belongs to the dUTPase family. As to quaternary structure, homotrimer. The cofactor is Mg(2+). In terms of processing, nuclear isoform 2 is phosphorylated in vivo on Ser-11, a reaction that can be catalyzed in vitro by CDC2. Phosphorylation in mature T-cells occurs in a cell cycle-dependent manner. Isoform 3 is not phosphorylated. Found in a variety of tissues. Isoform 3 expression is constitutive, while isoform 2 expression correlates with the onset of DNA replication (at protein level). Isoform 2 degradation coincides with the cessation of nuclear DNA replication (at protein level).

Its subcellular location is the nucleus. The protein localises to the mitochondrion. The catalysed reaction is dUTP + H2O = dUMP + diphosphate + H(+). The protein operates within pyrimidine metabolism; dUMP biosynthesis; dUMP from dCTP (dUTP route): step 2/2. Phosphorylation is necessary for activity. Catalyzes the cleavage of 2'-deoxyuridine 5'-triphosphate (dUTP) into 2'-deoxyuridine 5'-monophosphate (dUMP) and inorganic pyrophosphate and through its action efficiently prevents uracil misincorporation into DNA and at the same time provides dUMP, the substrate for de novo thymidylate biosynthesis. Inhibits peroxisome proliferator-activated receptor (PPAR) activity by binding of its N-terminal to PPAR, preventing the latter's dimerization with retinoid X receptor. Essential for embryonic development. The chain is Deoxyuridine 5'-triphosphate nucleotidohydrolase, mitochondrial (DUT) from Homo sapiens (Human).